The chain runs to 390 residues: MKRVAILGSTGSIGVQALDVVGRFPDRFEVVGLAAGRNAPRLLEQIRRFRPRVVSVCDEAAARAVRAEAPPGTEVLSGDAGAVAVASHPDAAFVLAAISGGAGLRSTAAAIEAGKPVGLANKESMVLAGELLMARAAAKGVPILPVDSEHSAIHQSLVGHNRGEVRRLILTASGGPLRCTPEAELATVTPERALKHPNWSMGDKITIDSATLMNKGLEVIEARWLFGVEQQRIDIVVHPESVVHSMVEYVDGSIVAQLGISDMRGPISYAMGHPERMPLDLPPLDLGRLGKLTFEPPDPARFPAYTLAYRALELGGTAPAVLSGADEAAVAAFLARRCSFTGIAEVCADVLEAHVVEPVRSVEQALAASEHGRREAEKRVGARAHAPAGR.

NADPH-binding residues include Thr-10, Gly-11, Ser-12, Ile-13, Gly-36, Arg-37, Asn-38, and Asn-121. Lys-122 contacts 1-deoxy-D-xylulose 5-phosphate. Glu-123 lines the NADPH pocket. Asp-147 provides a ligand contact to Mn(2+). 1-deoxy-D-xylulose 5-phosphate-binding residues include Ser-148, Glu-149, Ser-173, and His-196. Glu-149 is a binding site for Mn(2+). Gly-202 provides a ligand contact to NADPH. 1-deoxy-D-xylulose 5-phosphate contacts are provided by Ser-209, Asn-214, Lys-215, and Glu-218. Glu-218 contacts Mn(2+). A disordered region spans residues 367-390; that stretch reads AASEHGRREAEKRVGARAHAPAGR. Residues 370 to 380 are compositionally biased toward basic and acidic residues; it reads EHGRREAEKRV.

This sequence belongs to the DXR family. The cofactor is Mg(2+). Mn(2+) serves as cofactor.

It catalyses the reaction 2-C-methyl-D-erythritol 4-phosphate + NADP(+) = 1-deoxy-D-xylulose 5-phosphate + NADPH + H(+). The protein operates within isoprenoid biosynthesis; isopentenyl diphosphate biosynthesis via DXP pathway; isopentenyl diphosphate from 1-deoxy-D-xylulose 5-phosphate: step 1/6. Its function is as follows. Catalyzes the NADPH-dependent rearrangement and reduction of 1-deoxy-D-xylulose-5-phosphate (DXP) to 2-C-methyl-D-erythritol 4-phosphate (MEP). The sequence is that of 1-deoxy-D-xylulose 5-phosphate reductoisomerase from Anaeromyxobacter sp. (strain K).